Here is a 194-residue protein sequence, read N- to C-terminus: Protein GrpE 2 (194 aa).

Residues 1–17 show a composition bias toward basic and acidic residues; that stretch reads MNDIDKHKKETQTESKN. The disordered stretch occupies residues 1 to 29; it reads MNDIDKHKKETQTESKNDLNNTTITQNNV. Positions 18 to 29 are enriched in polar residues; that stretch reads DLNNTTITQNNV.

Belongs to the GrpE family. In terms of assembly, homodimer.

It localises to the cytoplasm. Functionally, participates actively in the response to hyperosmotic and heat shock by preventing the aggregation of stress-denatured proteins, in association with DnaK and GrpE. It is the nucleotide exchange factor for DnaK and may function as a thermosensor. Unfolded proteins bind initially to DnaJ; upon interaction with the DnaJ-bound protein, DnaK hydrolyzes its bound ATP, resulting in the formation of a stable complex. GrpE releases ADP from DnaK; ATP binding to DnaK triggers the release of the substrate protein, thus completing the reaction cycle. Several rounds of ATP-dependent interactions between DnaJ, DnaK and GrpE are required for fully efficient folding. This is Protein GrpE 2 from Buchnera aphidicola subsp. Baizongia pistaciae (strain Bp).